A 452-amino-acid polypeptide reads, in one-letter code: Phosphoglucosamine mutase 2 (452 aa).

S101 (phosphoserine intermediate) is an active-site residue. Positions 101, 245, 247, and 249 each coordinate Mg(2+). Position 101 is a phosphoserine (S101).

It belongs to the phosphohexose mutase family. It depends on Mg(2+) as a cofactor. In terms of processing, activated by phosphorylation.

The enzyme catalyses alpha-D-glucosamine 1-phosphate = D-glucosamine 6-phosphate. Functionally, catalyzes the conversion of glucosamine-6-phosphate to glucosamine-1-phosphate. The protein is Phosphoglucosamine mutase 2 of Shewanella amazonensis (strain ATCC BAA-1098 / SB2B).